We begin with the raw amino-acid sequence, 334 residues long: Photosystem II assembly protein Ycf48 (334 aa).

An N-terminal signal peptide occupies residues 1–22 (MAKMLKLWRLVLLAAFSLLLMA).

This sequence belongs to the Ycf48 family. Part of early PSII assembly complexes which includes D1 (psbA) and PsbI; not found in mature PSII. Binds to the lumenal side of PSII complexes. Interacts with YidC.

It localises to the cellular thylakoid lumen. In terms of biological role, a factor required for optimal assembly of photosystem II (PSII), acting in the early stages of PSII assembly. Also plays a role in replacement of photodamaged D1 (psbA). Assists YidC in synthesis of chlorophyll-binding proteins. The sequence is that of Photosystem II assembly protein Ycf48 from Synechococcus sp. (strain JA-3-3Ab) (Cyanobacteria bacterium Yellowstone A-Prime).